The sequence spans 365 residues: Pituitary-specific positive transcription factor 1 (365 aa).

Positions 5-12 (AFSADSFT) match the 9aaTAD motif. The disordered stretch occupies residues 160 to 191 (PAVLSEEPPLGGTKDLRLRSRPPDDPPDMDSP). Residues 173-183 (KDLRLRSRPPD) are compositionally biased toward basic and acidic residues. The 75-residue stretch at 188 to 262 (MDSPQIRELE…ILAKWLDEAE (75 aa)) folds into the POU-specific domain. The homeobox DNA-binding region spans 278-337 (KRKRRTTISLGAKEALERSFREKIKPSSQEIVRMAEGLHLEKEVVRVWFCNRRQREKRVK).

Belongs to the POU transcription factor family. Class-1 subfamily.

It is found in the nucleus. In terms of biological role, transcription factor that activates growth hormone and prolactin genes. Specifically binds to the consensus sequence 5'-TAAAT-3'. This is Pituitary-specific positive transcription factor 1 (pou1f1) from Oncorhynchus keta (Chum salmon).